Consider the following 329-residue polypeptide: Beta-ketoacyl-[acyl-carrier-protein] synthase III (329 aa).

Active-site residues include Cys113 and His256. The ACP-binding stretch occupies residues 257–261; the sequence is QANQR. Asn286 is an active-site residue.

It belongs to the thiolase-like superfamily. FabH family. In terms of assembly, homodimer.

Its subcellular location is the cytoplasm. It catalyses the reaction malonyl-[ACP] + acetyl-CoA + H(+) = 3-oxobutanoyl-[ACP] + CO2 + CoA. The protein operates within lipid metabolism; fatty acid biosynthesis. Its function is as follows. Catalyzes the condensation reaction of fatty acid synthesis by the addition to an acyl acceptor of two carbons from malonyl-ACP. Catalyzes the first condensation reaction which initiates fatty acid synthesis and may therefore play a role in governing the total rate of fatty acid production. Possesses both acetoacetyl-ACP synthase and acetyl transacylase activities. Its substrate specificity determines the biosynthesis of branched-chain and/or straight-chain of fatty acids. This Natranaerobius thermophilus (strain ATCC BAA-1301 / DSM 18059 / JW/NM-WN-LF) protein is Beta-ketoacyl-[acyl-carrier-protein] synthase III.